We begin with the raw amino-acid sequence, 458 residues long: Smoothelin-like protein 2 (458 aa).

The stretch at 24-88 forms a coiled coil; the sequence is LEGAVRALHE…RQVESLGLTT (65 aa). 3 disordered regions span residues 87–111, 123–142, and 151–312; these read TTGLAPAPGTPSPPPAPGVPNRAPR, FSLSGRSQSLDHHDEASELE, and IIEN…GAQA. A compositionally biased stretch (pro residues) spans 94–104; it reads PGTPSPPPAPG. At threonine 96 the chain carries Phosphothreonine. Residues serine 98, serine 126, and serine 131 each carry the phosphoserine modification. Positions 131–142 are enriched in basic and acidic residues; the sequence is SLDHHDEASELE. Low complexity-rich tracts occupy residues 158-167 and 209-220; these read PGADPGDGPP and TSATALSPTSAA. Over residues 225-244 the composition is skewed to polar residues; it reads LSSSPSEATTPWTPSPSEKN. A compositionally biased stretch (low complexity) spans 245–254; it reads SSLPRSLSSS. Serine 252, serine 254, and serine 267 each carry phosphoserine. Residues 270–283 are compositionally biased toward pro residues; that stretch reads LVTPPQSPPSPQPP. Residue threonine 272 is modified to Phosphothreonine. Serine 276 is subject to Phosphoserine. Positions 290–299 are enriched in basic and acidic residues; it reads RPGERRRELV. Residues 300-310 show a composition bias toward polar residues; the sequence is RSQTLPRTSGA. Serine 341 carries the post-translational modification Phosphoserine. The Calponin-homology (CH) domain occupies 348–455; it reads SSIKQILLEW…YVQSLYNHLR (108 aa).

It belongs to the smoothelin family.

This is Smoothelin-like protein 2 (SMTNL2) from Bos taurus (Bovine).